Reading from the N-terminus, the 471-residue chain is Acetylcholinesterase collagenic tail peptide (471 aa).

The signal sequence occupies residues 1–30; it reads MLGILLQKATATLASGLNSSRAGMFPIALG. The interval 70–86 is PRAD; that stretch reads CCLLTPPPPPMFPPPFF. Collagen-like domains are found at residues 118–282 and 293–307; these read GPPG…SGLP and GPKG…VGRC. 2 disordered regions span residues 140 to 205 and 237 to 267; these read EIGE…GEKG and KGVS…IGPP. Composition is skewed to low complexity over residues 155 to 164 and 242 to 251; these read VRGPRGMPGS and APGHRGPVGR. Tandem repeats lie at residues 388-413 and 420-443. The 2 X 26 AA approximate repeats stretch occupies residues 388 to 443; it reads FCGDEIVQVENGEECDDGNRIVTDSCINCKQAYCGDGYLQSGLEECDGKDFGYHTC.

Belongs to the COLQ family. The asymmetric form of AChE is a disulfide-bonded oligomer composed of a collagenic subunit (Q) and a variable number of asymmetric (T) catalytic subunits. The N-terminal of the collagenic subunit (Q) associates with the C-terminal of the catalytic subunit (T). As to expression, expressed in electric organs but not in muscle.

Its subcellular location is the synapse. Its function is as follows. Anchors the catalytic subunits of asymmetric AChE to the synaptic basal lamina. The sequence is that of Acetylcholinesterase collagenic tail peptide from Torpedo marmorata (Marbled electric ray).